Reading from the N-terminus, the 403-residue chain is Cytochrome P450 monooxygenase ustC (403 aa).

The first 18 residues, Met-1–Gly-18, serve as a signal peptide directing secretion. 2 N-linked (GlcNAc...) asparagine glycosylation sites follow: Asn-52 and Asn-92. Cys-318 provides a ligand contact to heme.

This sequence belongs to the cytochrome P450 family. Requires heme as cofactor.

The protein operates within mycotoxin biosynthesis. In terms of biological role, cytochrome P450 monooxygenase; part of the gene cluster that mediates the biosynthesis of the secondary metabolite ustiloxin B, an antimitotic tetrapeptide. First, ustA is processed by the subtilisin-like endoprotease Kex2 that is outside the ustiloxin B gene cluster, at the C-terminal side of Arg-Lys, after transfer to Golgi apparatus through the endoplasmic reticulum (ER). Cleavage by KEX2 generates 16 peptides YAIG-I to YAIG-XVI. To process the precursor peptide further, at least two peptidases are necessary to cleave the N-terminal and C-terminal sides of the Tyr-Ala-Ile-Gly core peptide which serves as backbone for the synthesis of ustiloxin B, through cyclization and modification of the tyrosine with a non-protein coding amino acid, norvaline. One of the two peptidases must be the serine peptidase ustP; and the other pepdidase is probably ustH. Macrocyclization of the core peptide derived from ustA requires the tyrosinase ustQ, as well as the homologous oxidases ustYa and ustYb, and leads to the production of the first cyclization product N-desmethylustiloxin F. For the formation of N-desmethylustiloxin F, three oxidation steps are required, hydroxylation at the benzylic position, hydroxylation at either the aromatic ring of Tyr or beta-position of Ile, and oxidative cyclization. UstQ may catalyze the oxidation of a phenol moiety, whereas the ustYa and ustYb are most likely responsible for the remaining two-step oxidations. N-desmethylustiloxin F is then methylated by ustM to yield ustiloxin F which in turn substrate of the cytochrome P450 monooxygenase ustC which catalyzes the formation of S-deoxyustiloxin H. The flavoprotein monooxygenases ustF1 and ustF2 then participate in the modification of the side chain of S-deoxyustiloxin H, leading to the synthesis of an oxime intermediate, via ustiloxin H. Finally, carboxylative dehydration performed by the cysteine desulfurase-like protein ustD yields ustiloxin B. The protein is Cytochrome P450 monooxygenase ustC of Aspergillus flavus (strain ATCC 200026 / FGSC A1120 / IAM 13836 / NRRL 3357 / JCM 12722 / SRRC 167).